The chain runs to 339 residues: Cyclin-Y-like protein 1-A (339 aa).

A compositionally biased stretch (polar residues) spans 1 to 13 (MGNTVTCCVSPDS). Residues 1–42 (MGNTVTCCVSPDSSPKEGRDREVTESGEPYQAQGEPQDGDVQ) form a disordered region. Residues 14–24 (SPKEGRDREVT) show a composition bias toward basic and acidic residues. Residues 141 to 263 (DIFDEKLHPI…FLELLQFNIN (123 aa)) enclose the Cyclin N-terminal domain.

Belongs to the cyclin family. Cyclin Y subfamily.

The sequence is that of Cyclin-Y-like protein 1-A (ccnyl1-a) from Xenopus laevis (African clawed frog).